We begin with the raw amino-acid sequence, 336 residues long: Ribosomal RNA large subunit methyltransferase F (336 aa).

Positions 1-24 (MPRPTSPHPDAERKSASPLHPRNR) are disordered.

It belongs to the methyltransferase superfamily. METTL16/RlmF family.

The protein localises to the cytoplasm. It carries out the reaction adenosine(1618) in 23S rRNA + S-adenosyl-L-methionine = N(6)-methyladenosine(1618) in 23S rRNA + S-adenosyl-L-homocysteine + H(+). Functionally, specifically methylates the adenine in position 1618 of 23S rRNA. This is Ribosomal RNA large subunit methyltransferase F from Pseudomonas aeruginosa (strain LESB58).